Consider the following 550-residue polypeptide: MKSLVLGLLVGSAIASGPLQHVLHAPPEPEPEPEPEPQVVKDPFEELRDTFDRLRNKAGDIWDDVMDNIPNIISNIRPPTIPPKKFTRLPDSEWTHIVRGADLEALWVDDESGYKHRKVDGKLAQYDLRIRAVDPSNLGIDNVKQYSGYLDDNLNDKHLFYWFFESRNDPDGDPVMLWLNGGPGCSSLTGMFFELGPSSITEDIKVKYNPYSWNSNSSIIFLDQPVNVGFSYSSQPVSDTVAAAKDIYALLTLFFTQFPQYSTQDFHIAGESYAGHYIPVIASEIMHHKDRNINLQSVMIGNGLTDPYTQYPLYRPMACGEGGYPNVLDSETCRSMDKALPRCLSMIKSCYDVESTFTCLPASIYCNNALIGPYQSTGRNPYDVRIDCKGNGLCYPQLNYITDYLNQPYVMKSLGVEVDSYESCNMDINRNFLLHGDWMKPYHRLVPYLLAQMPVLIYAGDADFICNWLGNKAWTEALEYPGHTKYAQSPMENLTMVNSEGINEIFGEVKSHSNLTFMRIFKAGHMTPFDTPQASLEFANSWLSGEWSEV.

An N-terminal signal peptide occupies residues 1–18; the sequence is MKSLVLGLLVGSAIASGP. Residues 19–131 constitute a propeptide that is removed on maturation; sequence LQHVLHAPPE…KLAQYDLRIR (113 aa). 5 disulfide bridges follow: Cys-185/Cys-424, Cys-319/Cys-333, Cys-343/Cys-366, Cys-350/Cys-359, and Cys-388/Cys-394. The N-linked (GlcNAc...) asparagine glycan is linked to Asn-216. Residue Ser-272 is part of the active site. The active site involves Asp-463. N-linked (GlcNAc...) asparagine glycosylation is found at Asn-493 and Asn-514. Residue His-525 is part of the active site.

The protein belongs to the peptidase S10 family.

It is found in the vacuole. It carries out the reaction Release of a C-terminal amino acid with broad specificity.. In terms of biological role, vacuolar carboxypeptidase involved in degradation of small peptides. Digests preferentially peptides containing an aliphatic or hydrophobic residue in P1' position, as well as methionine, leucine or phenylalanine in P1 position of ester substrate. The sequence is that of Carboxypeptidase Y homolog A (CPYA) from Paracoccidioides lutzii (strain ATCC MYA-826 / Pb01) (Paracoccidioides brasiliensis).